We begin with the raw amino-acid sequence, 89 residues long: Putative acyl-CoA-binding protein (89 aa).

The ACB domain maps to 3 to 88 (VEEQFKTSAE…VKELVEKNGL (86 aa)). Residues Lys15, 30-34 (YSLYK), Lys52, Lys56, and Tyr75 each bind an acyl-CoA.

This sequence belongs to the ACBP family.

In terms of biological role, binds medium- and long-chain acyl-CoA esters with very high affinity and may function as an intracellular carrier of acyl-CoA esters. This Hypsibius exemplaris (Freshwater tardigrade) protein is Putative acyl-CoA-binding protein.